The following is a 539-amino-acid chain: Tyrosinase (539 aa).

His-63, His-84, His-93, His-290, His-294, and His-333 together coordinate Cu cation. Residues 82 to 84 (CHH) constitute a cross-link (2'-(S-cysteinyl)-histidine (Cys-His)).

This sequence belongs to the tyrosinase family. Homotetramer. Cu(2+) serves as cofactor. The N-terminus is blocked.

The enzyme catalyses 2 L-dopa + O2 = 2 L-dopaquinone + 2 H2O. It carries out the reaction L-tyrosine + O2 = L-dopaquinone + H2O. Its activity is regulated as follows. Activated by acidifying treatment at pH 3.0. Functionally, this is a copper-containing oxidase that functions in the formation of pigments such as melanins and other polyphenolic compounds. The protein is Tyrosinase (melO) of Aspergillus oryzae (strain ATCC 42149 / RIB 40) (Yellow koji mold).